The primary structure comprises 178 residues: Adenine phosphoribosyltransferase (178 aa).

It belongs to the purine/pyrimidine phosphoribosyltransferase family. In terms of assembly, homodimer.

The protein resides in the cytoplasm. It catalyses the reaction AMP + diphosphate = 5-phospho-alpha-D-ribose 1-diphosphate + adenine. It participates in purine metabolism; AMP biosynthesis via salvage pathway; AMP from adenine: step 1/1. Functionally, catalyzes a salvage reaction resulting in the formation of AMP, that is energically less costly than de novo synthesis. The polypeptide is Adenine phosphoribosyltransferase (Mycoplasmoides gallisepticum (strain R(low / passage 15 / clone 2)) (Mycoplasma gallisepticum)).